The primary structure comprises 568 residues: Potassium-transporting ATPase potassium-binding subunit (568 aa).

Transmembrane regions (helical) follow at residues 7–27 (ITIG…GGFL), 65–85 (HYAL…YAIL), 136–156 (GLTV…AAII), 179–199 (LYVL…EGIP), 254–274 (LTNF…TNVF), 285–305 (WAVF…VYWA), 332–352 (FGVA…CGAV), 354–374 (AMHE…MMLG), 377–397 (IIGG…IAVF), 423–443 (MLAV…AVVV), 487–507 (ITLG…ALAI), and 530–550 (LFIG…FLPA).

The protein belongs to the KdpA family. The system is composed of three essential subunits: KdpA, KdpB and KdpC.

Its subcellular location is the cell inner membrane. Its function is as follows. Part of the high-affinity ATP-driven potassium transport (or Kdp) system, which catalyzes the hydrolysis of ATP coupled with the electrogenic transport of potassium into the cytoplasm. This subunit binds the periplasmic potassium ions and delivers the ions to the membrane domain of KdpB through an intramembrane tunnel. The protein is Potassium-transporting ATPase potassium-binding subunit of Granulibacter bethesdensis (strain ATCC BAA-1260 / CGDNIH1).